The chain runs to 563 residues: Dihydroxy-acid dehydratase (563 aa).

A [2Fe-2S] cluster-binding site is contributed by Cys51. Residue Asp83 coordinates Mg(2+). Cys124 contributes to the [2Fe-2S] cluster binding site. Asp125 and Lys126 together coordinate Mg(2+). Lys126 carries the post-translational modification N6-carboxylysine. Cys196 lines the [2Fe-2S] cluster pocket. Mg(2+) is bound at residue Glu448. Ser474 acts as the Proton acceptor in catalysis.

Belongs to the IlvD/Edd family. In terms of assembly, homodimer. It depends on [2Fe-2S] cluster as a cofactor. Requires Mg(2+) as cofactor.

It carries out the reaction (2R)-2,3-dihydroxy-3-methylbutanoate = 3-methyl-2-oxobutanoate + H2O. It catalyses the reaction (2R,3R)-2,3-dihydroxy-3-methylpentanoate = (S)-3-methyl-2-oxopentanoate + H2O. It functions in the pathway amino-acid biosynthesis; L-isoleucine biosynthesis; L-isoleucine from 2-oxobutanoate: step 3/4. The protein operates within amino-acid biosynthesis; L-valine biosynthesis; L-valine from pyruvate: step 3/4. Functions in the biosynthesis of branched-chain amino acids. Catalyzes the dehydration of (2R,3R)-2,3-dihydroxy-3-methylpentanoate (2,3-dihydroxy-3-methylvalerate) into 2-oxo-3-methylpentanoate (2-oxo-3-methylvalerate) and of (2R)-2,3-dihydroxy-3-methylbutanoate (2,3-dihydroxyisovalerate) into 2-oxo-3-methylbutanoate (2-oxoisovalerate), the penultimate precursor to L-isoleucine and L-valine, respectively. This Polynucleobacter necessarius subsp. necessarius (strain STIR1) protein is Dihydroxy-acid dehydratase.